Consider the following 262-residue polypeptide: Protein crossbronx-like (262 aa).

The region spanning 15-179 is the UBC core domain; sequence RQGYQVLAEY…VQELALFTKK (165 aa).

Belongs to the ubiquitin-conjugating enzyme family. FTS subfamily.

This Drosophila pseudoobscura pseudoobscura (Fruit fly) protein is Protein crossbronx-like.